Consider the following 442-residue polypeptide: Shufflon protein B (442 aa).

The segment at 1–361 (MKKYDRGWAS…TGAILSCQSG (361 aa)) is constant region. Residues 362–442 (TWKSSSASIW…SYFMKITCLK (81 aa)) are variable region.

In Escherichia coli, this protein is Shufflon protein B.